Here is a 330-residue protein sequence, read N- to C-terminus: DNA-directed RNA polymerase subunit alpha (330 aa).

Residues Met-1–Lys-237 are alpha N-terminal domain (alpha-NTD). The segment at Phe-251–Glu-330 is alpha C-terminal domain (alpha-CTD).

This sequence belongs to the RNA polymerase alpha chain family. Homodimer. The RNAP catalytic core consists of 2 alpha, 1 beta, 1 beta' and 1 omega subunit. When a sigma factor is associated with the core the holoenzyme is formed, which can initiate transcription.

It catalyses the reaction RNA(n) + a ribonucleoside 5'-triphosphate = RNA(n+1) + diphosphate. In terms of biological role, DNA-dependent RNA polymerase catalyzes the transcription of DNA into RNA using the four ribonucleoside triphosphates as substrates. This chain is DNA-directed RNA polymerase subunit alpha, found in Legionella pneumophila (strain Corby).